The following is a 164-amino-acid chain: Respiratory growth induced protein 2 (164 aa).

It belongs to the RGI1 family.

The protein localises to the cytoplasm. Its function is as follows. Involved in the control of energetic metabolism and significantly contribute to cell fitness, especially under respiratory growth conditions. This is Respiratory growth induced protein 2 (RGI2) from Candida glabrata (strain ATCC 2001 / BCRC 20586 / JCM 3761 / NBRC 0622 / NRRL Y-65 / CBS 138) (Yeast).